A 509-amino-acid polypeptide reads, in one-letter code: Proton-gated ion channel subunit pbo-5 (509 aa).

The signal sequence occupies residues 1 to 21 (MTRLSILQHLLTFLILSKINA). The Extracellular segment spans residues 22–275 (TSTTESYFDS…ISLKRRPLFY (254 aa)). Cys193 and Cys207 are joined by a disulfide. 3 helical membrane passes run 276–296 (MVTL…GLFA), 310–330 (LGVT…EKVP), and 336–356 (VPLL…AAMT). Topologically, residues 357-487 (TGIVMKVHRL…GYVRISERLD (131 aa)) are cytoplasmic. Residues 488-508 (ILFMFLFLSTVTIPVAVLFYL) form a helical membrane-spanning segment.

It belongs to the ligand-gated ion channel (TC 1.A.9) family. Acetylcholine receptor (TC 1.A.9.1) subfamily. In terms of assembly, the functional channel is a heterooligomer of pbo-5 and pbo-6. May self-associate to form homooligomers with negligible ion channel activity. In terms of tissue distribution, expressed in the posterior body muscles. Also detected in the RIFL, RIFR and RIS head neurons.

It localises to the membrane. In terms of biological role, forms a proton-gated ion channel with pbo-6 that is activated by acidification of the posterior coelomic space, leading to posterior body wall muscle contraction (pBoc) during the defecation cycle. Probably by regulating the defecation motor program, required for fatty acid uptake by intestinal cells. Does not bind neurotransmitters such as acetylcholine, gamma-aminobutyric acid, glycine, serotonin, glutamate or choline. The sequence is that of Proton-gated ion channel subunit pbo-5 from Caenorhabditis elegans.